A 389-amino-acid polypeptide reads, in one-letter code: Succinate--CoA ligase [ADP-forming] subunit beta (389 aa).

The ATP-grasp domain occupies 9–244 (KEILRKFGVA…LDEEDPAEVE (236 aa)). ATP is bound by residues Lys-46, 53 to 55 (GRG), Glu-99, Ala-102, and Glu-107. Mg(2+) contacts are provided by Asn-199 and Asp-213. Substrate is bound by residues Asn-264 and 321–323 (GIM).

It belongs to the succinate/malate CoA ligase beta subunit family. In terms of assembly, heterotetramer of two alpha and two beta subunits. It depends on Mg(2+) as a cofactor.

The enzyme catalyses succinate + ATP + CoA = succinyl-CoA + ADP + phosphate. It catalyses the reaction GTP + succinate + CoA = succinyl-CoA + GDP + phosphate. Its pathway is carbohydrate metabolism; tricarboxylic acid cycle; succinate from succinyl-CoA (ligase route): step 1/1. In terms of biological role, succinyl-CoA synthetase functions in the citric acid cycle (TCA), coupling the hydrolysis of succinyl-CoA to the synthesis of either ATP or GTP and thus represents the only step of substrate-level phosphorylation in the TCA. The beta subunit provides nucleotide specificity of the enzyme and binds the substrate succinate, while the binding sites for coenzyme A and phosphate are found in the alpha subunit. This chain is Succinate--CoA ligase [ADP-forming] subunit beta, found in Paraburkholderia xenovorans (strain LB400).